The primary structure comprises 402 residues: Calcium-responsive transactivator (402 aa).

The tract at residues 1–148 is N-terminal auto-inhibitory domain; necessary for interaction with SMARCA4/BRG1; the sequence is MSVAFASARP…TLPTTSMSLS (148 aa). Positions 50–53 match the SH2-binding motif; that stretch reads YQQI. Disordered regions lie at residues 72–171 and 221–402; these read QSLL…VPMQ and AMMG…NYQQ. Positions 85-106 are enriched in low complexity; that stretch reads LGPGALSQSGSSQGLHPQGSLS. 2 stretches are compositionally biased toward polar residues: residues 128-149 and 161-171; these read NHVS…SLSG and SGPTSQSVPMQ. A methionine-rich intra-molecular domain region spans residues 149 to 238; that stretch reads GSGHGTGPGY…GGSMMGQRPM (90 aa). The span at 233-251 shows a compositional bias: low complexity; sequence MGQRPMAPYRPSQQGSSQQ. The interval 252–323 is MFD domain; the sequence is YLGQEEYYSE…SQYSQQQAGY (72 aa). Positions 261 to 277 are enriched in polar residues; sequence EQYSHSQGSAEPMSQQY. Positions 296 to 305 are enriched in basic and acidic residues; sequence SYDRSFEDPT. Residues 311–375 show a composition bias toward low complexity; it reads GGNSQYSQQQ…QGQGQQYGSY (65 aa). A necessary for nuclear localization region spans residues 340–402; sequence NQQSYPGQQQ…EQGQYGNYQQ (63 aa). Positions 359–362 match the SH2-binding motif; the sequence is SQYS. Positions 376 to 388 are enriched in polar residues; sequence RTSQTGPSAQQQR. An SH3-binding motif is present at residues 377–385; sequence TSQTGPSAQ. Low complexity predominate over residues 390-402; it reads YGYEQGQYGNYQQ. The segment at 393–402 is necessary for interaction with CREBBP and for the recruitment of CREBBP to the nuclear bodies; the sequence is EQGQYGNYQQ. The short motif at 397–400 is the SH2-binding element; that stretch reads YGNY.

It belongs to the SS18 family. In terms of assembly, homodimer. Dimerization may be necessary for its function in neuronal dendritic development. Interacts (via C-terminus) with CREBBP (via N-terminus), EP300 and SMARCA4/BRG1. Interacts with the nBAF complex. Association with CREBBP facilitates transcription while the association with SMARCA4/BRG1 suppresses CREST-mediated transcription in resting neurons.

The protein resides in the nucleus. Its subcellular location is the chromosome. It is found in the centromere. It localises to the kinetochore. Its function is as follows. Transcriptional activator which is required for calcium-dependent dendritic growth and branching in cortical neurons. Recruits CREB-binding protein (CREBBP) to nuclear bodies. Component of the CREST-BRG1 complex, a multiprotein complex that regulates promoter activation by orchestrating a calcium-dependent release of a repressor complex and a recruitment of an activator complex. In resting neurons, transcription of the c-FOS promoter is inhibited by BRG1-dependent recruitment of a phospho-RB1-HDAC1 repressor complex. Upon calcium influx, RB1 is dephosphorylated by calcineurin, which leads to release of the repressor complex. At the same time, there is increased recruitment of CREBBP to the promoter by a CREST-dependent mechanism, which leads to transcriptional activation. The CREST-BRG1 complex also binds to the NR2B promoter, and activity-dependent induction of NR2B expression involves a release of HDAC1 and recruitment of CREBBP. The polypeptide is Calcium-responsive transactivator (Ss18l1) (Mus musculus (Mouse)).